A 486-amino-acid polypeptide reads, in one-letter code: Galactose-1-phosphate uridylyltransferase (486 aa).

Belongs to the galactose-1-phosphate uridylyltransferase type 2 family.

Its subcellular location is the cytoplasm. It carries out the reaction alpha-D-galactose 1-phosphate + UDP-alpha-D-glucose = alpha-D-glucose 1-phosphate + UDP-alpha-D-galactose. It functions in the pathway carbohydrate metabolism; galactose metabolism. The chain is Galactose-1-phosphate uridylyltransferase from Lacticaseibacillus casei (Lactobacillus casei).